Here is a 423-residue protein sequence, read N- to C-terminus: Protein CLP1 homolog (423 aa).

ATP is bound by residues glutamate 19, lysine 60, and 122 to 127; that span reads DVGKTT.

Belongs to the Clp1 family. Clp1 subfamily.

The protein resides in the nucleus. Its function is as follows. Required for endonucleolytic cleavage during polyadenylation-dependent pre-mRNA 3'-end formation. This Culex quinquefasciatus (Southern house mosquito) protein is Protein CLP1 homolog (cbc).